Reading from the N-terminus, the 83-residue chain is Cytochrome b559 subunit alpha (83 aa).

Residues V21–W35 form a helical membrane-spanning segment. H23 contacts heme.

It belongs to the PsbE/PsbF family. As to quaternary structure, heterodimer of an alpha subunit and a beta subunit. PSII is composed of 1 copy each of membrane proteins PsbA, PsbB, PsbC, PsbD, PsbE, PsbF, PsbH, PsbI, PsbJ, PsbK, PsbL, PsbM, PsbT, PsbX, PsbY, PsbZ, Psb30/Ycf12, at least 3 peripheral proteins of the oxygen-evolving complex and a large number of cofactors. It forms dimeric complexes. Heme b serves as cofactor.

It localises to the plastid. The protein localises to the chloroplast thylakoid membrane. This b-type cytochrome is tightly associated with the reaction center of photosystem II (PSII). PSII is a light-driven water:plastoquinone oxidoreductase that uses light energy to abstract electrons from H(2)O, generating O(2) and a proton gradient subsequently used for ATP formation. It consists of a core antenna complex that captures photons, and an electron transfer chain that converts photonic excitation into a charge separation. This chain is Cytochrome b559 subunit alpha, found in Liriodendron tulipifera (Tuliptree).